A 437-amino-acid chain; its full sequence is Adenosylhomocysteinase (437 aa).

Threonine 54, aspartate 125, and glutamate 170 together coordinate substrate. 171-173 (TTT) contacts NAD(+). Substrate contacts are provided by lysine 200 and aspartate 204. NAD(+) is bound by residues asparagine 205, 234–239 (GYGWVG), glutamate 258, asparagine 293, 314–316 (AGH), and asparagine 361.

Belongs to the adenosylhomocysteinase family. NAD(+) is required as a cofactor.

It is found in the cytoplasm. It catalyses the reaction S-adenosyl-L-homocysteine + H2O = L-homocysteine + adenosine. It functions in the pathway amino-acid biosynthesis; L-homocysteine biosynthesis; L-homocysteine from S-adenosyl-L-homocysteine: step 1/1. In terms of biological role, may play a key role in the regulation of the intracellular concentration of adenosylhomocysteine. In Pyrobaculum aerophilum (strain ATCC 51768 / DSM 7523 / JCM 9630 / CIP 104966 / NBRC 100827 / IM2), this protein is Adenosylhomocysteinase.